The primary structure comprises 361 residues: Carbamoyl phosphate synthase small chain (361 aa).

The interval Met1–Asp173 is CPSase. 3 residues coordinate L-glutamine: Ser45, Gly225, and Gly227. The 185-residue stretch at Glu177–His361 folds into the Glutamine amidotransferase type-1 domain. Cys252 (nucleophile) is an active-site residue. Residues Leu253, Gln256, Asn294, Gly296, and Phe297 each coordinate L-glutamine. Active-site residues include His337 and Glu339.

It belongs to the CarA family. Composed of two chains; the small (or glutamine) chain promotes the hydrolysis of glutamine to ammonia, which is used by the large (or ammonia) chain to synthesize carbamoyl phosphate. Tetramer of heterodimers (alpha,beta)4.

The catalysed reaction is hydrogencarbonate + L-glutamine + 2 ATP + H2O = carbamoyl phosphate + L-glutamate + 2 ADP + phosphate + 2 H(+). It carries out the reaction L-glutamine + H2O = L-glutamate + NH4(+). The protein operates within amino-acid biosynthesis; L-arginine biosynthesis; carbamoyl phosphate from bicarbonate: step 1/1. It participates in pyrimidine metabolism; UMP biosynthesis via de novo pathway; (S)-dihydroorotate from bicarbonate: step 1/3. Small subunit of the glutamine-dependent carbamoyl phosphate synthetase (CPSase). CPSase catalyzes the formation of carbamoyl phosphate from the ammonia moiety of glutamine, carbonate, and phosphate donated by ATP, constituting the first step of 2 biosynthetic pathways, one leading to arginine and/or urea and the other to pyrimidine nucleotides. The small subunit (glutamine amidotransferase) binds and cleaves glutamine to supply the large subunit with the substrate ammonia. In Methanopyrus kandleri (strain AV19 / DSM 6324 / JCM 9639 / NBRC 100938), this protein is Carbamoyl phosphate synthase small chain.